We begin with the raw amino-acid sequence, 408 residues long: Glutamate N-acetyltransferase (408 aa).

Positions 150, 176, 189, 271, 403, and 408 each coordinate substrate. Residue threonine 189 is the Nucleophile of the active site.

This sequence belongs to the ArgJ family. In terms of assembly, heterotetramer of two alpha and two beta chains.

The protein localises to the cytoplasm. It carries out the reaction N(2)-acetyl-L-ornithine + L-glutamate = N-acetyl-L-glutamate + L-ornithine. Its pathway is amino-acid biosynthesis; L-arginine biosynthesis; L-ornithine and N-acetyl-L-glutamate from L-glutamate and N(2)-acetyl-L-ornithine (cyclic): step 1/1. In terms of biological role, catalyzes the transfer of the acetyl group from N(2)-acetylornithine to glutamate, forming N-acetylglutamate and L-ornithine. This Methanococcus vannielii (strain ATCC 35089 / DSM 1224 / JCM 13029 / OCM 148 / SB) protein is Glutamate N-acetyltransferase.